The primary structure comprises 316 residues: Peroxisomal targeting signal 2 receptor (316 aa).

WD repeat units lie at residues 56-96 (DTRD…GGRP), 102-142 (EHTK…SLKT), 145-185 (EHRY…SLNT), 188-228 (AHDH…RPTT), 232-272 (GHTY…DPII), and 277-316 (HHTE…GQFR).

It belongs to the WD repeat peroxin-7 family. As to quaternary structure, interacts with PEX5; interaction only takes place when PEX7 is associated with cargo proteins.

The protein localises to the cytoplasm. The protein resides in the cytosol. It localises to the peroxisome matrix. Its function is as follows. Receptor required for the peroxisomal import of proteins containing a C-terminal PTS2-type peroxisomal targeting signal. Specifically binds to cargo proteins containing a PTS2 peroxisomal targeting signal in the cytosol. Cargo protein-binding triggers interaction with PEX5 and formation of a ternary complex composed of PEX5 and PEX7 along with PTS2-containing cargo proteins, which is tranlocated into peroxisomes by passing through the PEX13-PEX14 docking complex. The sequence is that of Peroxisomal targeting signal 2 receptor (pex7) from Dictyostelium discoideum (Social amoeba).